Consider the following 684-residue polypeptide: UvrABC system protein B (684 aa).

The Helicase ATP-binding domain occupies 32-420 (DGVLRGDRWQ…GGVVVEQLIR (389 aa)). ATP is bound at residue 45–52 (GVTGSGKT). The Beta-hairpin signature appears at 98–121 (YYDFYQPEAYIPSLDKYIAKDLKI). The Helicase C-terminal domain maps to 437 to 603 (QIDHLLARIR…SIIKSVDQVL (167 aa)). Residues 643–678 (MLMVAEMNAEMQKAAEQTDYEKAAYLRDEILMLQER) form the UVR domain.

This sequence belongs to the UvrB family. Forms a heterotetramer with UvrA during the search for lesions. Interacts with UvrC in an incision complex.

It localises to the cytoplasm. Its function is as follows. The UvrABC repair system catalyzes the recognition and processing of DNA lesions. A damage recognition complex composed of 2 UvrA and 2 UvrB subunits scans DNA for abnormalities. Upon binding of the UvrA(2)B(2) complex to a putative damaged site, the DNA wraps around one UvrB monomer. DNA wrap is dependent on ATP binding by UvrB and probably causes local melting of the DNA helix, facilitating insertion of UvrB beta-hairpin between the DNA strands. Then UvrB probes one DNA strand for the presence of a lesion. If a lesion is found the UvrA subunits dissociate and the UvrB-DNA preincision complex is formed. This complex is subsequently bound by UvrC and the second UvrB is released. If no lesion is found, the DNA wraps around the other UvrB subunit that will check the other stand for damage. This chain is UvrABC system protein B, found in Chlorobaculum tepidum (strain ATCC 49652 / DSM 12025 / NBRC 103806 / TLS) (Chlorobium tepidum).